The chain runs to 462 residues: MHTSVFKEPKNNDAVLSNHCNASVAFLHLGCEKNLVDTEHMMGLLASEGYGVSSNTDDAEVVVVNTCSFIEQAREESVRALVGLADQGKEIIIAGCLAQHFKSELLESIPEAKAIVGTGDYQNIIEVLQRVRQGERVNQVSENPKFVGDENLPRYRTTGRFVSYLKVAEGCNYRCAFCIIPTLRGNQRSRSVQSIVNEANQLAKEGIQELILISQITTNYGMDLYGRPYLADLLRALSHVDIPWIRIHYAYPTGLTPEVVLAYKEVPNVLPYFDLPLQHSHPDVLRAMNRPWQSDVSSALLNRIKEQLPEAVMRTTLIVGFPGETKAQFDHLCAFVENQKFDHVGVFAFSREEGTEAAKLPNQVPFEIAQARKDKLVAIQQPISAAKNQALIGQTVDVLIEREDLATGELIGRSARFAPEVDGEVRLRPSQVLFNDLHGKIVPALITGSELYDLTGEINHLN.

The region spanning 22-133 (ASVAFLHLGC…IIEVLQRVRQ (112 aa)) is the MTTase N-terminal domain. Residues cysteine 31, cysteine 67, cysteine 96, cysteine 171, cysteine 175, and cysteine 178 each coordinate [4Fe-4S] cluster. In terms of domain architecture, Radical SAM core spans 157–386 (TTGRFVSYLK…VAIQQPISAA (230 aa)). Positions 389 to 460 (QALIGQTVDV…LYDLTGEINH (72 aa)) constitute a TRAM domain.

This sequence belongs to the methylthiotransferase family. RimO subfamily. [4Fe-4S] cluster is required as a cofactor.

It is found in the cytoplasm. It catalyses the reaction L-aspartate(89)-[ribosomal protein uS12]-hydrogen + (sulfur carrier)-SH + AH2 + 2 S-adenosyl-L-methionine = 3-methylsulfanyl-L-aspartate(89)-[ribosomal protein uS12]-hydrogen + (sulfur carrier)-H + 5'-deoxyadenosine + L-methionine + A + S-adenosyl-L-homocysteine + 2 H(+). In terms of biological role, catalyzes the methylthiolation of an aspartic acid residue of ribosomal protein uS12. This chain is Ribosomal protein uS12 methylthiotransferase RimO, found in Prochlorococcus marinus (strain MIT 9211).